The following is a 453-amino-acid chain: Chromosomal replication initiator protein DnaA (453 aa).

The segment at 1–78 is domain I, interacts with DnaA modulators; it reads MTENEQLFWN…FEIFNAEITA (78 aa). Residues 78–112 form a domain II region; the sequence is ANYVSNDLHLQETSFSNYQQSSNEVNTLPIRKIDS. A domain III, AAA+ region region spans residues 113–331; the sequence is NLKEKYTFAN…GALKNISLVA (219 aa). The ATP site is built by Gly157, Gly159, Lys160, and Thr161. Residues 332–453 form a domain IV, binds dsDNA region; sequence DFKHAKTITV…EIETIKNKIR (122 aa).

The protein belongs to the DnaA family. In terms of assembly, oligomerizes as a right-handed, spiral filament on DNA at oriC.

It is found in the cytoplasm. Its function is as follows. Plays an essential role in the initiation and regulation of chromosomal replication. ATP-DnaA binds to the origin of replication (oriC) to initiate formation of the DNA replication initiation complex once per cell cycle. Binds the DnaA box (a 9 base pair repeat at the origin) and separates the double-stranded (ds)DNA. Forms a right-handed helical filament on oriC DNA; dsDNA binds to the exterior of the filament while single-stranded (ss)DNA is stabiized in the filament's interior. The ATP-DnaA-oriC complex binds and stabilizes one strand of the AT-rich DNA unwinding element (DUE), permitting loading of DNA polymerase. After initiation quickly degrades to an ADP-DnaA complex that is not apt for DNA replication. Binds acidic phospholipids. The chain is Chromosomal replication initiator protein DnaA from Streptococcus agalactiae serotype Ia (strain ATCC 27591 / A909 / CDC SS700).